We begin with the raw amino-acid sequence, 1941 residues long: Xin actin-binding repeat-containing protein 1 (1941 aa).

A disordered region spans residues 1-41 (MAEPQKSSKVAIKKMEDDLPPPPIPDSIQVIAPASQDPNPL). Xin repeat units follow at residues 108 to 123 (GEVQ…WALD), 143 to 158 (GDVK…QSVN), 176 to 191 (GDVH…QPLD), 215 to 230 (GDVK…QSLD), 255 to 270 (GDVK…EPLC), 293 to 308 (NAVR…QPLD), 331 to 346 (PDVS…QPLD), 368 to 383 (ADVT…QALD), 402 to 417 (GDVK…QPME), 439 to 454 (GDVK…CPLG), 475 to 490 (GDVK…LPLD), 510 to 525 (GNVK…TPLY), 548 to 563 (GDVK…RPLD), 586 to 601 (GDVR…QPMD), 624 to 639 (GDVK…QPMH), 658 to 673 (ADVK…QPLD), 697 to 712 (VDVK…EPLG), 736 to 751 (GEVS…KPLD), 769 to 784 (GSVH…YPMD), 805 to 820 (GDVG…YSLD), 842 to 857 (ANVK…QPLY), 880 to 895 (GDVK…KPLD), 917 to 932 (GDVQ…EPLD), 951 to 966 (GDVQ…QQVG), 982 to 997 (GDVR…QPVD), 1020 to 1035 (GDVK…QPMD), and 1055 to 1070 (ADVK…TPLD). The segment covering 1514-1565 (ASKQETKTLQSTIHQQESASTMRENTSTAIRTSTTRVQEASRTHTSVSQKSI) has biased composition (polar residues). 3 disordered regions span residues 1514–1568 (ASKQ…IASH), 1715–1856 (ASGS…PPPA), and 1914–1941 (YKAR…GEVG). Residues 1820-1833 (SASTNNSTNRSTKS) show a composition bias toward low complexity. Residues 1834 to 1843 (VPPPVPPKPP) are compositionally biased toward pro residues.

It belongs to the Xin family. As to expression, expressed at intercalated disks in the heart (at protein level).

The protein resides in the cell junction. Its subcellular location is the adherens junction. It localises to the desmosome. Its function is as follows. Involved in cardiac morphogenesis, including heart midline formation, cardiac tubule looping, myocardial formation and maintenance of heart beat speed and rhythm. May protect actin filaments from depolymerization. May play a role in development of normal skeletal muscle morphology, muscle fiber type composition and regulation of muscle satellite cell activation and survival. The chain is Xin actin-binding repeat-containing protein 1 from Gallus gallus (Chicken).